The primary structure comprises 334 residues: Glyceraldehyde-3-phosphate dehydrogenase (334 aa).

Residues 10–11 (RI), Asp-33, Lys-77, and Thr-119 each bind NAD(+). D-glyceraldehyde 3-phosphate contacts are provided by residues 149 to 151 (SCT), Thr-180, 209 to 210 (TG), and Arg-232. The Nucleophile role is filled by Cys-150. NAD(+) is bound at residue Asn-314.

It belongs to the glyceraldehyde-3-phosphate dehydrogenase family. Homotetramer.

It is found in the cytoplasm. The enzyme catalyses D-glyceraldehyde 3-phosphate + phosphate + NAD(+) = (2R)-3-phospho-glyceroyl phosphate + NADH + H(+). Its pathway is carbohydrate degradation; glycolysis; pyruvate from D-glyceraldehyde 3-phosphate: step 1/5. Its function is as follows. Catalyzes the oxidative phosphorylation of glyceraldehyde 3-phosphate (G3P) to 1,3-bisphosphoglycerate (BPG) using the cofactor NAD. The first reaction step involves the formation of a hemiacetal intermediate between G3P and a cysteine residue, and this hemiacetal intermediate is then oxidized to a thioester, with concomitant reduction of NAD to NADH. The reduced NADH is then exchanged with the second NAD, and the thioester is attacked by a nucleophilic inorganic phosphate to produce BPG. The protein is Glyceraldehyde-3-phosphate dehydrogenase (gap) of Chlamydia trachomatis serovar L2 (strain ATCC VR-902B / DSM 19102 / 434/Bu).